Here is a 266-residue protein sequence, read N- to C-terminus: Phosphatidylglycerol--prolipoprotein diacylglyceryl transferase (266 aa).

A run of 7 helical transmembrane segments spans residues 21-41 (LAIRWYGLMYLVGFLFAMWLA), 60-80 (LLFAGFLGVVLGGRIGYVLFY), 95-115 (VWTGGMSFHGGLLGVMTAMLW), 124-144 (FFSVADFIAPLVPFGLGMGRM), 176-196 (SQLYEAFLEGFVLLIILNIFI), 203-223 (GAVSGLFLIGYGSFRFIIEYF), and 236-256 (WISMGQILSSPMIIFGALLML). R143 is an a 1,2-diacyl-sn-glycero-3-phospho-(1'-sn-glycerol) binding site.

It belongs to the Lgt family.

It localises to the cell inner membrane. It catalyses the reaction L-cysteinyl-[prolipoprotein] + a 1,2-diacyl-sn-glycero-3-phospho-(1'-sn-glycerol) = an S-1,2-diacyl-sn-glyceryl-L-cysteinyl-[prolipoprotein] + sn-glycerol 1-phosphate + H(+). The protein operates within protein modification; lipoprotein biosynthesis (diacylglyceryl transfer). Functionally, catalyzes the transfer of the diacylglyceryl group from phosphatidylglycerol to the sulfhydryl group of the N-terminal cysteine of a prolipoprotein, the first step in the formation of mature lipoproteins. The polypeptide is Phosphatidylglycerol--prolipoprotein diacylglyceryl transferase (Photobacterium profundum (strain SS9)).